A 227-amino-acid polypeptide reads, in one-letter code: (S)-2-haloacid dehalogenase (227 aa).

Catalysis depends on Asp10, which acts as the Nucleophile. An (S)-2-haloacid-binding positions include Leu11–Tyr12, Arg41, and Ser118–Asn119. Positions Ser175–Asp180 are important for catalytic activity.

This sequence belongs to the HAD-like hydrolase superfamily. S-2-haloalkanoic acid dehalogenase family.

The enzyme catalyses an (S)-2-haloacid + H2O = a (2R)-2-hydroxycarboxylate + a halide anion + H(+). The catalysed reaction is (S)-2-chloropropanoate + H2O = (R)-lactate + chloride + H(+). In terms of biological role, catalyzes the hydrolytic dehalogenation of small (S)-2-haloalkanoic acids to yield the corresponding (R)-2-hydroxyalkanoic acids. Acts on acids of short chain lengths, C(2) to C(4), with inversion of configuration at C-2. Active with 2-halogenated carboxylic acids and converts only the S-isomer (or L-isomer) of 2-chloropropionic acid with inversion of configuration to produce R-lactate (or D-isomer). The chain is (S)-2-haloacid dehalogenase (dhl VII) from Pseudomonas fluorescens.